Consider the following 132-residue polypeptide: Replication enhancer protein (132 aa).

Belongs to the geminiviridae replication enhancer protein family. As to quaternary structure, homooligomer. Interacts with the replication-associated protein (REP). Interacts with host proliferating cell nuclear antigen (PCNA). Interacts with host retinoblastoma-related protein 1 (RBR1), and may thereby deregulate the host cell cycle. Oligomerization and interaction with PCNA are necessary for optimal replication enhancement.

Its function is as follows. Increases viral DNA accumulation. Enhances infectivity and symptom expression. This Tomato mottle virus (isolate Florida) (ToMoV) protein is Replication enhancer protein.